Consider the following 198-residue polypeptide: Recombination protein RecR (198 aa).

The C4-type zinc finger occupies 56 to 71; it reads CKVCGNFSEEDECVIC. Positions 79–174 constitute a Toprim domain; the sequence is GVICVVEEPK…RVSKLASGLP (96 aa).

It belongs to the RecR family.

Functionally, may play a role in DNA repair. It seems to be involved in an RecBC-independent recombinational process of DNA repair. It may act with RecF and RecO. This chain is Recombination protein RecR, found in Tropheryma whipplei (strain Twist) (Whipple's bacillus).